The following is a 191-amino-acid chain: NF-kappa-B inhibitor-interacting Ras-like protein 2 (191 aa).

The small GTPase-like stretch occupies residues 1 to 191 (MGKSCKVVVC…KNKGSGSLDG (191 aa)). A GTP-binding site is contributed by 11–18 (GQASVGKT). Residues 35 to 43 (MIETQEDIY) carry the Effector region motif. GTP is bound by residues 61–65 (DTRGL) and 120–123 (NKCD). The disordered stretch occupies residues 169 to 191 (TQPQSKSAFPLSRKNKGSGSLDG).

This sequence belongs to the small GTPase superfamily. Ras family. KappaB-Ras subfamily. As to quaternary structure, interacts with both NF-kappa-B inhibitor alpha (NFKBIA) and beta (NFKBIB) in vitro. However, it probably only interacts with NFKBIB in vivo. Interacts with GFOD1. Widely expressed.

The protein resides in the cytoplasm. In terms of biological role, atypical Ras-like protein that acts as a potent regulator of NF-kappa-B activity by preventing the degradation of NF-kappa-B inhibitor beta (NFKBIB) by most signals, explaining why NFKBIB is more resistant to degradation. May act by blocking phosphorylation of NFKBIB and nuclear localization of p65/RELA NF-kappa-B subunit. It is unclear whether it acts as a GTPase. Both GTP- and GDP-bound forms block phosphorylation of NFKBIB. The protein is NF-kappa-B inhibitor-interacting Ras-like protein 2 (NKIRAS2) of Homo sapiens (Human).